Consider the following 90-residue polypeptide: Probable Fe(2+)-trafficking protein (90 aa).

This sequence belongs to the Fe(2+)-trafficking protein family.

Its function is as follows. Could be a mediator in iron transactions between iron acquisition and iron-requiring processes, such as synthesis and/or repair of Fe-S clusters in biosynthetic enzymes. The chain is Probable Fe(2+)-trafficking protein from Herminiimonas arsenicoxydans.